We begin with the raw amino-acid sequence, 110 residues long: Large ribosomal subunit protein uL22 (110 aa).

It belongs to the universal ribosomal protein uL22 family. In terms of assembly, part of the 50S ribosomal subunit.

This protein binds specifically to 23S rRNA; its binding is stimulated by other ribosomal proteins, e.g. L4, L17, and L20. It is important during the early stages of 50S assembly. It makes multiple contacts with different domains of the 23S rRNA in the assembled 50S subunit and ribosome. In terms of biological role, the globular domain of the protein is located near the polypeptide exit tunnel on the outside of the subunit, while an extended beta-hairpin is found that lines the wall of the exit tunnel in the center of the 70S ribosome. The protein is Large ribosomal subunit protein uL22 of Nitrosococcus oceani (strain ATCC 19707 / BCRC 17464 / JCM 30415 / NCIMB 11848 / C-107).